The following is a 466-amino-acid chain: Asparagine--tRNA ligase (466 aa).

The protein belongs to the class-II aminoacyl-tRNA synthetase family. As to quaternary structure, homodimer.

The protein resides in the cytoplasm. The catalysed reaction is tRNA(Asn) + L-asparagine + ATP = L-asparaginyl-tRNA(Asn) + AMP + diphosphate + H(+). The polypeptide is Asparagine--tRNA ligase (Enterobacter sp. (strain 638)).